We begin with the raw amino-acid sequence, 332 residues long: Solute carrier family 25 member 16 (332 aa).

Solcar repeat units follow at residues 34 to 120 (FYWL…YKTL), 128 to 216 (SGHV…LKSV), and 238 to 328 (LKTH…MKQF). 6 consecutive transmembrane segments (helical) span residues 37–57 (LRSF…VAPL), 88–108 (GFLG…PYGA), 134–154 (LMAG…LDMV), 191–211 (GLMP…FTFG), 244–264 (LLCG…FDVT), and 299–319 (GLYR…AVAF).

The protein belongs to the mitochondrial carrier (TC 2.A.29) family.

The protein resides in the mitochondrion inner membrane. May be involved in the transport of coenzyme A in the mitochondrial matrix. Very little is known about the physiological function of this carrier. The polypeptide is Solute carrier family 25 member 16 (Homo sapiens (Human)).